The sequence spans 677 residues: UvrABC system protein B (677 aa).

Positions Asp-26–Val-414 constitute a Helicase ATP-binding domain. An ATP-binding site is contributed by Gly-39–Thr-46. The Beta-hairpin signature appears at Tyr-92–Ile-115. One can recognise a Helicase C-terminal domain in the interval Gln-432 to Met-598. The region spanning Met-637–Gln-672 is the UVR domain.

It belongs to the UvrB family. As to quaternary structure, forms a heterotetramer with UvrA during the search for lesions. Interacts with UvrC in an incision complex.

The protein localises to the cytoplasm. In terms of biological role, the UvrABC repair system catalyzes the recognition and processing of DNA lesions. A damage recognition complex composed of 2 UvrA and 2 UvrB subunits scans DNA for abnormalities. Upon binding of the UvrA(2)B(2) complex to a putative damaged site, the DNA wraps around one UvrB monomer. DNA wrap is dependent on ATP binding by UvrB and probably causes local melting of the DNA helix, facilitating insertion of UvrB beta-hairpin between the DNA strands. Then UvrB probes one DNA strand for the presence of a lesion. If a lesion is found the UvrA subunits dissociate and the UvrB-DNA preincision complex is formed. This complex is subsequently bound by UvrC and the second UvrB is released. If no lesion is found, the DNA wraps around the other UvrB subunit that will check the other stand for damage. The sequence is that of UvrABC system protein B from Idiomarina loihiensis (strain ATCC BAA-735 / DSM 15497 / L2-TR).